Consider the following 1149-residue polypeptide: MDFGSIAAKMTLDISNFTSQLNLAQSQAQRLALESSKSFQIGSALTGLGKGLTTAVTLPLMGFAAASIKVGNEFQAQMSRVQAIAGATAEELGRMKTQAIDLGAKTAFSAKEAAQGMENLASAGFQVNEIMDAMPGVLDLAAVSGGDVAASSEAMASSLRAFGLEANQAGHVADVFARAAADTNAETSDMAEAMKYVAPVAHSMGLSLEETAASIGIMADAGIKGSQAGTTLRGALSRIAKPTKAMVKSMQELGVSFYDANGNMIPLREQIAQLKTATAGLTQEERNRHLVTLYGQNSLSGMLALLDAGPEKLDKMTNALVNSDGAAKEMAETMQDNLASKIEQMGGAFESVAIIVQQILEPALAKIVGAITKVLEAFVNMSPIGQKMVVIFAGMVAALGPLLLIAGMVMTTIVKLRIAIQFLGPAFMGTMGTIAGVIAIFYALVAVFMIAYTKSERFRNFINSLAPAIKAGFGGALEWLLPRLKELGEWLQKAGEKAKEFGQSVGSKVSKLLEQFGISIGQAGGSIGQFIGNVLERLGGAFGKVGGVISIAVSLVTKFGLAFLGITGPLGIAISLLVSFLTAWARTGEFNADGITQVFENLTNTIQSTADFISQYLPVFVEKGTQILVKIIEGIASAVPQVVEVISQVIENIVMTISTVMPQLVEAGIKILEALINGLVQSLPTIIQAAVQIITALFNGLVQALPTLIQAGLQILSALINGLVQALPAIIQAAVQIIMSLVQALIENLPMIIEAAMQIIMGLVNALIENIGPILEAGIQILMALIEGLIQVLPELITAAIQIITSLLEAILSNLPQLLEAGVKLLLSLLQGLLNMLPQLIAGALQIMMALLKAVIDFVPKLLQAGVQLLKALIQGIASLLGSLLSTAGNMLSSLVSKIASFVGQMVSGGANLIRNFISGIGSMIGSAVSKIGSMGTSIVSKVTGFAGQMVSAGVNLVRGFINGISSMVSSAVSAAANMASSALNAVKGFLGIHSPSRVMEQMGIYTGQGFVNGIGNMIRTTRDKAKEMAETVTEALSDVKMDIQENGVIEKVKSVYEKMADQLPETLPAPDFEDVRKAAGSPRVDLFNTGSDNPNQPQSQSKNNQGEQTVVNIGTIVVRNNDDVDKLSRGLYNRSKETLSGFGNIVTP.

The next 8 membrane-spanning stretches (helical) occupy residues 389–409 (VVIF…AGMV), 431–451 (MGTI…FMIA), 561–581 (LAFL…VSFL), 689–709 (AAVQ…PTLI), 726–746 (ALPA…QALI), 781–801 (ILMA…TAAI), 840–860 (LIAG…DFVP), and 865–885 (AGVQ…GSLL). A disordered region spans residues 1084 to 1109 (RVDLFNTGSDNPNQPQSQSKNNQGEQ). A compositionally biased stretch (low complexity) spans 1094-1106 (NPNQPQSQSKNNQ).

The protein resides in the host membrane. It is found in the virion. Plays a role in virion tail formation. The length of the tape measure protein is proportional to the length of the phage's tail. In Streptococcus pneumoniae (Bacteriophage Dp-1), this protein is Tape measure protein (TMP).